The chain runs to 121 residues: RxLR effector protein PexRD2 (121 aa).

A signal peptide spans 1-18 (MRLSYVFVVFAASLLVTA). A RxLR-dEER motif is present at residues 38 to 56 (RLLRKHYTAAENDGDSEAR). The segment at 57–121 (ALNPEKMKTM…LNYVAEHTAV (65 aa)) is WY domain.

The protein belongs to the RxLR effector family.

It is found in the secreted. It localises to the host cytoplasm. Its subcellular location is the host nucleus. Its function is as follows. Secreted effector involved in P.mirabilis colonization of host plants. May perturb the signaling of cell death associated with plant immunity, via interaction with a host MAP kinase. In Phytophthora mirabilis, this protein is RxLR effector protein PexRD2.